The sequence spans 345 residues: Aspartate--ammonia ligase (345 aa).

The protein belongs to the class-II aminoacyl-tRNA synthetase family. AsnA subfamily.

Its subcellular location is the cytoplasm. The catalysed reaction is L-aspartate + NH4(+) + ATP = L-asparagine + AMP + diphosphate + H(+). It functions in the pathway amino-acid biosynthesis; L-asparagine biosynthesis; L-asparagine from L-aspartate (ammonia route): step 1/1. In Parabacteroides distasonis (strain ATCC 8503 / DSM 20701 / CIP 104284 / JCM 5825 / NCTC 11152), this protein is Aspartate--ammonia ligase.